Reading from the N-terminus, the 354-residue chain is S-adenosylmethionine:tRNA ribosyltransferase-isomerase (354 aa).

It belongs to the QueA family. In terms of assembly, monomer.

Its subcellular location is the cytoplasm. It carries out the reaction 7-aminomethyl-7-carbaguanosine(34) in tRNA + S-adenosyl-L-methionine = epoxyqueuosine(34) in tRNA + adenine + L-methionine + 2 H(+). Its pathway is tRNA modification; tRNA-queuosine biosynthesis. Functionally, transfers and isomerizes the ribose moiety from AdoMet to the 7-aminomethyl group of 7-deazaguanine (preQ1-tRNA) to give epoxyqueuosine (oQ-tRNA). The chain is S-adenosylmethionine:tRNA ribosyltransferase-isomerase from Methylobacterium radiotolerans (strain ATCC 27329 / DSM 1819 / JCM 2831 / NBRC 15690 / NCIMB 10815 / 0-1).